Consider the following 233-residue polypeptide: Small ribosomal subunit protein uS3 (233 aa).

Positions 28–96 constitute a KH type-2 domain; it reads EFADNLDSDF…LRKVVADIAG (69 aa).

The protein belongs to the universal ribosomal protein uS3 family. Part of the 30S ribosomal subunit. Forms a tight complex with proteins S10 and S14.

Its function is as follows. Binds the lower part of the 30S subunit head. Binds mRNA in the 70S ribosome, positioning it for translation. In Shigella flexneri, this protein is Small ribosomal subunit protein uS3.